The sequence spans 300 residues: tRNA pseudouridine synthase B (300 aa).

Residue D41 is the Nucleophile of the active site.

Belongs to the pseudouridine synthase TruB family. Type 1 subfamily.

The enzyme catalyses uridine(55) in tRNA = pseudouridine(55) in tRNA. Its function is as follows. Responsible for synthesis of pseudouridine from uracil-55 in the psi GC loop of transfer RNAs. The sequence is that of tRNA pseudouridine synthase B from Synechococcus sp. (strain WH7803).